The primary structure comprises 315 residues: Methionyl-tRNA formyltransferase (315 aa).

113–116 (SLLP) is a (6S)-5,6,7,8-tetrahydrofolate binding site.

Belongs to the Fmt family.

It catalyses the reaction L-methionyl-tRNA(fMet) + (6R)-10-formyltetrahydrofolate = N-formyl-L-methionyl-tRNA(fMet) + (6S)-5,6,7,8-tetrahydrofolate + H(+). Attaches a formyl group to the free amino group of methionyl-tRNA(fMet). The formyl group appears to play a dual role in the initiator identity of N-formylmethionyl-tRNA by promoting its recognition by IF2 and preventing the misappropriation of this tRNA by the elongation apparatus. This is Methionyl-tRNA formyltransferase from Yersinia enterocolitica serotype O:8 / biotype 1B (strain NCTC 13174 / 8081).